We begin with the raw amino-acid sequence, 414 residues long: 3-ketoacyl-CoA thiolase, peroxisomal (414 aa).

The N-terminal 9 residues, 1-9, are a transit peptide targeting the peroxisome; that stretch reads MDRLNNLAT. Positions 1-9 are PTS2-type peroxisomal targeting signal; that stretch reads MDRLNNLAT. The active-site Acyl-thioester intermediate is Cys-115. Active-site proton acceptor residues include His-370 and Cys-400.

Belongs to the thiolase-like superfamily. Thiolase family. Homodimer. Interacts (via PTS2-type peroxisomal targeting signal region) with PEX7; leading to its translocation into peroxisomes.

The protein localises to the peroxisome. The catalysed reaction is an acyl-CoA + acetyl-CoA = a 3-oxoacyl-CoA + CoA. Its pathway is lipid metabolism; fatty acid metabolism. Its function is as follows. Responsible for the thiolytic cleavage of straight chain 3-keto fatty acyl-CoAs (3-oxoacyl-CoAs). This chain is 3-ketoacyl-CoA thiolase, peroxisomal (POT1), found in Yarrowia lipolytica (strain CLIB 122 / E 150) (Yeast).